The sequence spans 146 residues: 3-dehydroquinate dehydratase (146 aa).

The Proton acceptor role is filled by Y23. The substrate site is built by N75, H81, and D88. H101 serves as the catalytic Proton donor. Residues 102–103 and R112 each bind substrate; that span reads LS.

The protein belongs to the type-II 3-dehydroquinase family. As to quaternary structure, homododecamer.

The catalysed reaction is 3-dehydroquinate = 3-dehydroshikimate + H2O. The protein operates within metabolic intermediate biosynthesis; chorismate biosynthesis; chorismate from D-erythrose 4-phosphate and phosphoenolpyruvate: step 3/7. Functionally, catalyzes a trans-dehydration via an enolate intermediate. The chain is 3-dehydroquinate dehydratase from Marinobacter nauticus (strain ATCC 700491 / DSM 11845 / VT8) (Marinobacter aquaeolei).